The sequence spans 315 residues: Protein-L-isoaspartate O-methyltransferase (315 aa).

Disordered regions lie at residues 1 to 47 and 59 to 89; these read MSGE…KPAA and RALP…AAPK. Over residues 14-34 the composition is skewed to basic and acidic residues; the sequence is EDLKRAPRKSEVRSGSGERHA. Low complexity-rich tracts occupy residues 35–47 and 59–81; these read ASAV…KPAA and RALP…LKPA. Ser-162 is a catalytic residue.

This sequence belongs to the methyltransferase superfamily. L-isoaspartyl/D-aspartyl protein methyltransferase family.

The protein localises to the cytoplasm. The enzyme catalyses [protein]-L-isoaspartate + S-adenosyl-L-methionine = [protein]-L-isoaspartate alpha-methyl ester + S-adenosyl-L-homocysteine. Its function is as follows. Catalyzes the methyl esterification of L-isoaspartyl residues in peptides and proteins that result from spontaneous decomposition of normal L-aspartyl and L-asparaginyl residues. It plays a role in the repair and/or degradation of damaged proteins. The protein is Protein-L-isoaspartate O-methyltransferase of Burkholderia ambifaria (strain MC40-6).